The primary structure comprises 445 residues: GTPase Der (445 aa).

2 consecutive EngA-type G domains span residues 3-167 (PVIA…YAGE) and 180-353 (IKIA…AAAM). GTP is bound by residues 9 to 16 (GRPNVGKS), 56 to 60 (DTGGF), 119 to 122 (NKAE), 186 to 193 (GRPNVGKS), 233 to 237 (DTAGL), and 298 to 301 (NKWD). The KH-like domain occupies 354 to 438 (KKLPTPKLTR…PLRIEFRSST (85 aa)).

Belongs to the TRAFAC class TrmE-Era-EngA-EngB-Septin-like GTPase superfamily. EngA (Der) GTPase family. As to quaternary structure, associates with the 50S ribosomal subunit.

Functionally, GTPase that plays an essential role in the late steps of ribosome biogenesis. The chain is GTPase Der from Burkholderia pseudomallei (strain 1106a).